We begin with the raw amino-acid sequence, 639 residues long: 3-hydroxybenzoate 4-monooxygenase (639 aa).

FAD contacts are provided by residues 34–64 (DVLI…IVEQ), glutamine 73, valine 166, asparagine 212, 269–271 (RFY), tyrosine 317, aspartate 349, and serine 365.

This sequence belongs to the PheA/TfdB FAD monooxygenase family. As to quaternary structure, homodimer. Requires FAD as cofactor.

It carries out the reaction 3-hydroxybenzoate + NADPH + O2 + H(+) = 3,4-dihydroxybenzoate + NADP(+) + H2O. Converts 3-hydroxybenzoate (m-hydroxybenzoate), and to a lesser extent p-hydroxybenzoate, to 3,4-dihydroxybenzoate (protocatechuate). Also acts on a number of analogs of 3-hydroxybenzoate substituted in the 2, 4, 5 and 6 positions. The polypeptide is 3-hydroxybenzoate 4-monooxygenase (mobA) (Comamonas testosteroni (Pseudomonas testosteroni)).